A 284-amino-acid polypeptide reads, in one-letter code: MVLMIVSGRSGSGKSVALRALEDMGFYCVDNLPVVLLPDLARSLADRNISAAVSIDVRNMPESPEIFEQAMQNLPECFSPQLLFLDADRNTLIRRYSDTRRLHPLSSKNLSLESAIDEESDLLEPLRSRADLIVDTSEMSVHELAEMLRTRLLGKRERELTMVFESFGFKHGIPIDADYVFDVRFLPNPHWDPKLRPMTGLDKPVAAFLDRHTEVHNFIYQTRSYLELWLPMLETNNRSYLTVAIGCTGGKHRSVYIAEQLADYFRSRGKNVQSRHRTLEKRKS.

8–15 is a binding site for ATP; that stretch reads GRSGSGKS. Residue 56–59 participates in GTP binding; sequence DVRN. The segment at 266–284 is RNA-binding; it reads RSRGKNVQSRHRTLEKRKS.

This sequence belongs to the RapZ-like family. RapZ subfamily. As to quaternary structure, homotrimer.

Modulates the synthesis of GlmS, by affecting the processing and stability of the regulatory small RNA GlmZ. When glucosamine-6-phosphate (GlcN6P) concentrations are high in the cell, RapZ binds GlmZ and targets it to cleavage by RNase E. Consequently, GlmZ is inactivated and unable to activate GlmS synthesis. Under low GlcN6P concentrations, RapZ is sequestered and inactivated by an other regulatory small RNA, GlmY, preventing GlmZ degradation and leading to synthesis of GlmS. This chain is RNase adapter protein RapZ, found in Klebsiella pneumoniae (strain 342).